The primary structure comprises 1436 residues: Pleiotropic drug resistance protein 1 (1436 aa).

Residues 165-438 (LDSIHILPSK…FESMGFKCPE (274 aa)) enclose the ABC transporter 1 domain. Residue 198–205 (GPPGSGKT) coordinates ATP. The 214-residue stretch at 516–729 (QLLKVCTERE…SVNAILVNEF (214 aa)) folds into the ABC transmembrane type-2 1 domain. Helical transmembrane passes span 534–554 (FVYL…MTIF), 567–587 (GGIY…NGLS), 622–642 (IPVT…VMGF), 653–673 (FLLL…IAAV), 679–699 (VAST…GFIL), 707–727 (WWIW…ILVN), and 764–784 (IGVG…SVAL). Residues 796 to 826 (TISDESENNESESSPQITSTQEGDSASENKK) form a disordered region. Polar residues predominate over residues 810–821 (PQITSTQEGDSA). The region spanning 838 to 1090 (ITFDEVVYSV…HLIKYFESIP (253 aa)) is the ABC transporter 2 domain. 883–890 (GVSGAGKT) is a binding site for ATP. The ABC transmembrane type-2 2 domain maps to 1163-1377 (TQCMACLWKQ…TLYGLVASQF (215 aa)). 7 helical membrane-spanning segments follow: residues 1184 to 1204 (AVRL…FWDI), 1214 to 1234 (LVNA…QNSS), 1270 to 1290 (IPYI…MIGF), 1301 to 1321 (FFFM…TVAV), 1327 to 1347 (VASI…GFIV), 1358 to 1378 (WYYW…SQFG), and 1408 to 1428 (VVAA…ALGI).

The protein belongs to the ABC transporter superfamily. ABCG family. PDR (TC 3.A.1.205) subfamily. As to expression, roots, petals and leaf epidermis, where it is confined to glandular trichomes (at protein level).

The protein resides in the cell membrane. Functionally, excretes secondary metabolites such as terpenes. Involved in both constitutive and jasmonic acid-dependent induced defense. Confers some resistance to sclareol and B.cinerea. This chain is Pleiotropic drug resistance protein 1 (PDR1), found in Nicotiana plumbaginifolia (Leadwort-leaved tobacco).